The sequence spans 474 residues: MPPVSEVDRGPVEESSGGLKRSDCVCPVCLEIFLEPVTLPCMHTFCKPCFLETVDKSNMCCPLCRKRVSTWARLNSRNKTLVNMELWRRIQDAFPSQCERRVQGIDDDEEAVMIPKPRVCQPGELRKEYEDQISKLVEEKRALEEAERRASEEYIQRLLAEEEERLEEERRRREEQQLENDEKLARLLSLELNSGPASESTCNIKPAEATPAKKKPSVGDIEKFLRPVPHRQPSSSDSSPDSSLMANKENILSPPKPLSALSAEDCGKLTVHMLECNGKPSTSSFNPSTSEHTFVFNTPKSSSVKRKSSEIELQSEVDLHSKRPCALLRFDSSSEDSPFLSEVAVHEEALRSRWQQEEEDRRLALRIQKELDRENSVDRRKGSADSYQLRQKNTSVSTTTSPDVEGTKKGSNTTTAKNCTGRRGEEKTEKRLSGTTPGKRPGVKTPVSSTAVSSTVKKGTKQTTLTEMFPNMGS.

Basic and acidic residues predominate over residues 1–12 (MPPVSEVDRGPV). The segment at 1 to 20 (MPPVSEVDRGPVEESSGGLK) is disordered. The segment at 26-65 (CPVCLEIFLEPVTLPCMHTFCKPCFLETVDKSNMCCPLCR) adopts an RING-type zinc-finger fold. Residues 119–137 (VCQPGELRKEYEDQISKLV) carry the LR motif 1 motif. The UMI motif signature appears at 152–160 (EEYIQRLLA). The MIU motif 1 motif lies at 174 to 195 (EEQQLENDEKLARLLSLELNSG). Polar residues predominate over residues 192–203 (LNSGPASESTCN). 2 disordered regions span residues 192-259 (LNSG…KPLS) and 367-474 (IQKE…NMGS). The span at 233–243 (PSSSDSSPDSS) shows a compositional bias: low complexity. The MIU motif 2 motif lies at 353–376 (RWQQEEEDRRLALRIQKELDRENS). Residues 367–383 (IQKELDRENSVDRRKGS) are compositionally biased toward basic and acidic residues. The short motif at 379 to 390 (RRKGSADSYQLR) is the LR motif 2 element. Polar residues-rich tracts occupy residues 385-402 (DSYQLRQKNTSVSTTTSP) and 409-418 (KGSNTTTAKN). Residues 422 to 432 (RRGEEKTEKRL) are compositionally biased toward basic and acidic residues. Low complexity predominate over residues 443 to 457 (VKTPVSSTAVSSTVK).

Belongs to the RNF168 family. In terms of assembly, monomer.

It localises to the nucleus. It carries out the reaction S-ubiquitinyl-[E2 ubiquitin-conjugating enzyme]-L-cysteine + [acceptor protein]-L-lysine = [E2 ubiquitin-conjugating enzyme]-L-cysteine + N(6)-ubiquitinyl-[acceptor protein]-L-lysine.. It participates in protein modification; protein ubiquitination. E3 ubiquitin-protein ligase required for accumulation of repair proteins to sites of DNA damage. Acts with ube2n/ubc13 to amplify the rnf8-dependent histone ubiquitination. Recruited to sites of DNA damage at double-strand breaks (DSBs) by binding to ubiquitinated histone H2A and ubiquitinates histone H2A and H2AX, leading to amplify the rnf8-dependent H2A ubiquitination and promoting the formation of 'Lys-63'-linked ubiquitin conjugates. This leads to concentrate ubiquitinated histones H2A and H2AX at DNA lesions. Catalyzes monoubiquitination of 'Lys-13' and 'Lys-15' of nucleosomal histone H2A (H2AK13Ub and H2AK15Ub, respectively). The chain is E3 ubiquitin-protein ligase rnf168 from Danio rerio (Zebrafish).